The chain runs to 139 residues: MLRTMMKSKIHRATVTQADLHYVGSVTVDEDLLDAADLLPGELVHIVDIDNGARLETYTIAGERGSGVIGINGAAARLVHPGDLVILIAYGQMEDVEAKGFEPHVVFVDADNRVVSTGSDPADAPAGSGLLRGDRPAGR.

The active-site Schiff-base intermediate with substrate; via pyruvic acid is serine 25. Residue serine 25 is modified to Pyruvic acid (Ser). Residue threonine 57 participates in substrate binding. Catalysis depends on tyrosine 58, which acts as the Proton donor. 73-75 lines the substrate pocket; sequence GAA. The disordered stretch occupies residues 117-139; it reads TGSDPADAPAGSGLLRGDRPAGR.

The protein belongs to the PanD family. As to quaternary structure, heterooctamer of four alpha and four beta subunits. Pyruvate serves as cofactor. Is synthesized initially as an inactive proenzyme, which is activated by self-cleavage at a specific serine bond to produce a beta-subunit with a hydroxyl group at its C-terminus and an alpha-subunit with a pyruvoyl group at its N-terminus.

Its subcellular location is the cytoplasm. It carries out the reaction L-aspartate + H(+) = beta-alanine + CO2. It functions in the pathway cofactor biosynthesis; (R)-pantothenate biosynthesis; beta-alanine from L-aspartate: step 1/1. Catalyzes the pyruvoyl-dependent decarboxylation of aspartate to produce beta-alanine. The chain is Aspartate 1-decarboxylase from Nocardioides sp. (strain ATCC BAA-499 / JS614).